The chain runs to 175 residues: Gamma-crystallin B (175 aa).

2 Beta/gamma crystallin 'Greek key' domains span residues 2 to 40 (GKIT…RVDS) and 41 to 83 (GCWM…RLIP). A glycan (N-linked (Glc) (glycation) lysine; in vitro) is linked at Lys3. A disulfide bond links Cys19 and Cys23. Residues 84-88 (QHTGT) form a connecting peptide region. Beta/gamma crystallin 'Greek key' domains follow at residues 89–129 (FRMR…NVLE) and 130–172 (GSWV…RRVM).

Belongs to the beta/gamma-crystallin family.

Its function is as follows. Crystallins are the dominant structural components of the vertebrate eye lens. The chain is Gamma-crystallin B (CRYGB) from Bos taurus (Bovine).